The primary structure comprises 258 residues: Type II restriction enzyme HindII (258 aa).

It catalyses the reaction Endonucleolytic cleavage of DNA to give specific double-stranded fragments with terminal 5'-phosphates.. Its function is as follows. A P subtype restriction enzyme that recognizes the double-stranded sequence 5'-GTYRAC-3' and cleaves after Y-3. In Haemophilus influenzae (strain ATCC 51907 / DSM 11121 / KW20 / Rd), this protein is Type II restriction enzyme HindII (hindIIR).